A 430-amino-acid polypeptide reads, in one-letter code: MKITIAQAPQYIEQEVTIGAWLSNKRSSGKIAFLQLRDGTGFMQGIVVKSDVSEDVFSTSKNITQESSLYVTGKIVEDTRSDFGYEMQVSNVEVIHEANDYPITPKEHGTEFLMDHRHLWLRSKKQHAVMKIRNEIIRSTYEYFNKEGFVKVDPPILTGSSAEGTTELFHTKYFDEEAYLSQSGQLYMEAAAMALGKVFSFGPTFRAEKSKTRRHLIEFWMIEPEMAFVEHEESLQIQENYVSHIVQSVLTNCKLELSVLDRDLSKLEKIKAPFPRISYDEAIDMLKEKGFDDIEWGEDFGAPHETAIAESYDMPVFITNYPKDIKAFYMKPHPDRSDVVLCADLIAPEGYGEIIGGSQRIDDLELMEQRYEEHGLTGPAYQWYLELRKYGSVPHSGFGLGLERTVAWLSGVEHVRETIPFPRLLNRLYP.

The protein belongs to the class-II aminoacyl-tRNA synthetase family. In terms of assembly, homodimer.

It is found in the cytoplasm. The catalysed reaction is tRNA(Asn) + L-asparagine + ATP = L-asparaginyl-tRNA(Asn) + AMP + diphosphate + H(+). The sequence is that of Asparagine--tRNA ligase from Oceanobacillus iheyensis (strain DSM 14371 / CIP 107618 / JCM 11309 / KCTC 3954 / HTE831).